The chain runs to 478 residues: Adenosylhomocysteinase (478 aa).

Residues threonine 57, aspartate 139, and glutamate 201 each contribute to the substrate site. 202-204 (TTT) is an NAD(+) binding site. Lysine 231 and aspartate 235 together coordinate substrate. NAD(+) is bound by residues asparagine 236, 265–270 (GYGDVG), glutamate 288, asparagine 323, 344–346 (IGH), and asparagine 392.

This sequence belongs to the adenosylhomocysteinase family. NAD(+) is required as a cofactor.

It localises to the cytoplasm. The catalysed reaction is S-adenosyl-L-homocysteine + H2O = L-homocysteine + adenosine. It functions in the pathway amino-acid biosynthesis; L-homocysteine biosynthesis; L-homocysteine from S-adenosyl-L-homocysteine: step 1/1. Functionally, may play a key role in the regulation of the intracellular concentration of adenosylhomocysteine. The polypeptide is Adenosylhomocysteinase (Corynebacterium glutamicum (strain R)).